The primary structure comprises 460 residues: 3-isopropylmalate dehydratase large subunit (460 aa).

The [4Fe-4S] cluster site is built by Cys-338, Cys-398, and Cys-401.

This sequence belongs to the aconitase/IPM isomerase family. LeuC type 1 subfamily. As to quaternary structure, heterodimer of LeuC and LeuD. The cofactor is [4Fe-4S] cluster.

The enzyme catalyses (2R,3S)-3-isopropylmalate = (2S)-2-isopropylmalate. The protein operates within amino-acid biosynthesis; L-leucine biosynthesis; L-leucine from 3-methyl-2-oxobutanoate: step 2/4. In terms of biological role, catalyzes the isomerization between 2-isopropylmalate and 3-isopropylmalate, via the formation of 2-isopropylmaleate. This chain is 3-isopropylmalate dehydratase large subunit, found in Streptococcus sanguinis (strain SK36).